The chain runs to 696 residues: Lutropin-choriogonadotropic hormone receptor (696 aa).

Positions 1 to 27 (MRRRSLALRLLLALLLLPPPLPQTLLG) are cleaved as a signal peptide. The Extracellular portion of the chain corresponds to 28–358 (APCPEPCSCR…AFNPCEDIMG (331 aa)). Asparagine 99 carries an N-linked (GlcNAc...) asparagine glycan. LRR repeat units lie at residues 122 to 147 (LPRL…IFSS), 149 to 171 (FNFI…AFQG), 172 to 196 (MNNE…AFNG), 198 to 220 (TLIS…AFRG), 221 to 244 (ARGP…GLES), and 250 to 271 (ATSS…LLDA). Residues asparagine 174 and asparagine 195 are each glycosylated (N-linked (GlcNAc...) asparagine). N-linked (GlcNAc...) asparagine glycosylation is found at asparagine 291, asparagine 299, and asparagine 313. At tyrosine 331 the chain carries Sulfotyrosine. A helical transmembrane segment spans residues 359–386 (YDFLRVLIWLINILAIMGNVTVLFVLLT). Residues 387–395 (SHYKLTVPR) are Cytoplasmic-facing. The helical transmembrane segment at 396-418 (FLMCNLSFADFCMGLYLLLIASV) threads the bilayer. The Extracellular segment spans residues 419–439 (DAQTKGQYYNHAIDWQTGNGC). A disulfide bridge links cysteine 439 with cysteine 514. Residues 440–462 (SVAGFFTVFASELSVYTLTVITL) form a helical membrane-spanning segment. At 463–482 (ERWHTITYAIQLDQKLRLRH) the chain is on the cytoplasmic side. The helical transmembrane segment at 483 to 505 (AIPIMLGGWLFSTLIAMLPLVGV) threads the bilayer. At 506 to 525 (SSYMKVSICLPMDVETTLSQ) the chain is on the extracellular side. Residues 526–547 (VYILTILILNVVAFIIICACYI) traverse the membrane as a helical segment. Over 548-570 (KIYFAVQNPELMATNKDTKIAKK) the chain is Cytoplasmic. The chain crosses the membrane as a helical span at residues 571–594 (MAVLIFTDFTCMAPISFFAISAAL). Residues 595 to 605 (KVPLITVTNSK) are Extracellular-facing. The helical transmembrane segment at 606–626 (VLLVLFYPVNSCANPFLYAIF) threads the bilayer. Topologically, residues 627–696 (TKAFRRDFFL…VMDKTCYKDC (70 aa)) are cytoplasmic. S-palmitoyl cysteine attachment occurs at residues cysteine 643 and cysteine 644.

The protein belongs to the G-protein coupled receptor 1 family. FSH/LSH/TSH subfamily. Post-translationally, sulfated.

It localises to the cell membrane. Its function is as follows. Receptor for lutropin-choriogonadotropic hormone. The activity of this receptor is mediated by G proteins which activate adenylate cyclase. The protein is Lutropin-choriogonadotropic hormone receptor (LHCGR) of Sus scrofa (Pig).